We begin with the raw amino-acid sequence, 187 residues long: Probable nicotinate-nucleotide adenylyltransferase (187 aa).

It belongs to the NadD family.

It carries out the reaction nicotinate beta-D-ribonucleotide + ATP + H(+) = deamido-NAD(+) + diphosphate. Its pathway is cofactor biosynthesis; NAD(+) biosynthesis; deamido-NAD(+) from nicotinate D-ribonucleotide: step 1/1. Its function is as follows. Catalyzes the reversible adenylation of nicotinate mononucleotide (NaMN) to nicotinic acid adenine dinucleotide (NaAD). This Anaeromyxobacter dehalogenans (strain 2CP-1 / ATCC BAA-258) protein is Probable nicotinate-nucleotide adenylyltransferase.